The primary structure comprises 335 residues: GTPase Obg (335 aa).

The region spanning 1–158 (MFLDQITIEL…RQVELELKLI (158 aa)) is the Obg domain. An OBG-type G domain is found at 159–334 (ADIGLVGFPN…LNSLFTNRLS (176 aa)). GTP contacts are provided by residues 165–172 (GFPNAGKS), 190–194 (FTTLQ), 215–218 (DIPG), 285–288 (NKID), and 315–317 (SGL). Mg(2+)-binding residues include Ser172 and Thr192.

It belongs to the TRAFAC class OBG-HflX-like GTPase superfamily. OBG GTPase family. In terms of assembly, monomer. Requires Mg(2+) as cofactor.

Its subcellular location is the cytoplasm. An essential GTPase which binds GTP, GDP and possibly (p)ppGpp with moderate affinity, with high nucleotide exchange rates and a fairly low GTP hydrolysis rate. Plays a role in control of the cell cycle, stress response, ribosome biogenesis and in those bacteria that undergo differentiation, in morphogenesis control. This Chlamydia caviae (strain ATCC VR-813 / DSM 19441 / 03DC25 / GPIC) (Chlamydophila caviae) protein is GTPase Obg.